Reading from the N-terminus, the 1241-residue chain is Phosphorylase b kinase regulatory subunit alpha, skeletal muscle isoform (1241 aa).

Serine 629, serine 730, serine 736, serine 739, serine 759, serine 812, serine 973, serine 982, and serine 986 each carry phosphoserine. A calmodulin-binding region spans residues 811–841; it reads LSELYVKVGEIRHWGLIRYISGILRKKVEAL. Serine 1008 carries the phosphoserine; by autocatalysis modification. At serine 1019 the chain carries Phosphoserine; by PKA. Residues serine 1021 and serine 1024 each carry the phosphoserine modification. The segment at 1064 to 1104 is calmodulin-binding; sequence SKDSRQGQWQRRRRLDGALNRVPIGFYQKVWKILQKCHGLS. Serine 1131 is modified (phosphoserine). Cysteine 1238 carries the S-farnesyl cysteine lipid modification.

The protein belongs to the phosphorylase b kinase regulatory chain family. As to quaternary structure, hexadecamer of 4 heterotetramers, each composed of alpha, beta, gamma, and delta subunits. Alpha (PHKA1 or PHKA2) and beta (PHKB) are regulatory subunits, gamma (PHKG1 or PHKG2) is the catalytic subunit, and delta is calmodulin. In terms of processing, although the final Cys may be farnesylated, the terminal tripeptide is probably not removed, and the C-terminus is not methylated. As to expression, both isoforms are expressed in muscle.

The protein localises to the cell membrane. It participates in glycan biosynthesis; glycogen metabolism. By phosphorylation of various serine residues and by calcium. Phosphorylase b kinase catalyzes the phosphorylation of serine in certain substrates, including troponin I. The alpha chain may bind calmodulin. The sequence is that of Phosphorylase b kinase regulatory subunit alpha, skeletal muscle isoform (Phka1) from Mus musculus (Mouse).